A 142-amino-acid polypeptide reads, in one-letter code: Non-specific lipid transfer protein GPI-anchored 34 (142 aa).

An N-terminal signal peptide occupies residues 1 to 22 (MAVAVTAVLFLAVVIAPQWTET). Residues 21–43 (ETKKPPRPSDTSDTSGTSGRDRR) form a disordered region. The segment covering 29 to 38 (SDTSDTSGTS) has biased composition (low complexity). Disulfide bonds link C46-C85, C57-C69, C70-C106, and C83-C114. N120 carries the GPI-anchor amidated asparagine lipid modification. Positions 121–142 (GGATKKIVASMGLFGVVASLFF) are cleaved as a propeptide — removed in mature form.

It belongs to the plant LTP family.

It is found in the cell membrane. In terms of biological role, probable lipid transfer protein. The polypeptide is Non-specific lipid transfer protein GPI-anchored 34 (Arabidopsis thaliana (Mouse-ear cress)).